Reading from the N-terminus, the 214-residue chain is Calcineurin B homologous protein 3 (214 aa).

A disordered region spans residues 1–20; the sequence is MGAAHSASEEVRELEGKTGF. Residue Gly-2 is the site of N-myristoyl glycine attachment. The span at 7–16 shows a compositional bias: basic and acidic residues; it reads ASEEVRELEG. Positions 110-145 constitute an EF-hand domain; that stretch reads SRKEKLRFLFHMYDSDSDGRITLEEYRNVVEELLSG. Ca(2+) contacts are provided by Asp-123, Asp-125, Asp-127, Arg-129, and Glu-134.

It belongs to the calcineurin regulatory subunit family. CHP subfamily. Monomer. Homodimer; disulfide-linked. Interacts with SLC9A1/NHE1; the interaction enables an optimal Na(+)/H(+) exchange activity. In terms of tissue distribution, expressed in mature megakaryocytes and polymorphonuclear granulocytes (at protein level). Abundantly expressed in heart. Also expressed at a lower level in adult testis and salivary gland, and in the placenta.

Its subcellular location is the nucleus. It is found in the cytoplasm. It localises to the membrane. The protein resides in the cell membrane. The protein localises to the cell projection. Its subcellular location is the lamellipodium. It is found in the ruffle membrane. Functions as an integral cofactor in cell pH regulation by controlling plasma membrane-type Na(+)/H(+) exchange activity. Promotes the maturation, transport, cell surface stability and exchange activity of SLC9A1/NHE1 at the plasma membrane. Promotes the induction of hematopoietic stem cell differentiation toward megakaryocytic lineage. Essential for the coupling of ERK cascade activation with the expression of ETS family genes in megakaryocytic differentiation. Also involved in granulocytic differentiation in a ERK-dependent manner. Inhibits the phosphatase activity of calcineurin. This Homo sapiens (Human) protein is Calcineurin B homologous protein 3 (TESC).